An 871-amino-acid chain; its full sequence is Translation initiation factor IF-2 (871 aa).

2 disordered regions span residues 60-101 (KKNI…QEVK) and 184-203 (ESLK…KKES). Residues 61 to 72 (KNIKTPTAKKPK) show a composition bias toward basic residues. Positions 73–101 (KENIKEQEKLNESEKKEPKKEEKLKQEVK) are enriched in basic and acidic residues. One can recognise a tr-type G domain in the interval 370-537 (TRAPVITIMG…IVLLQADILE (168 aa)). The segment at 379-386 (GHVDHGKT) is G1. 379-386 (GHVDHGKT) is a binding site for GTP. The tract at residues 404–408 (GITQH) is G2. The G3 stretch occupies residues 425–428 (DTPG). GTP contacts are provided by residues 425–429 (DTPGH) and 479–482 (NKMD). A G4 region spans residues 479–482 (NKMD). Positions 515–517 (SAK) are G5.

This sequence belongs to the TRAFAC class translation factor GTPase superfamily. Classic translation factor GTPase family. IF-2 subfamily.

It localises to the cytoplasm. In terms of biological role, one of the essential components for the initiation of protein synthesis. Protects formylmethionyl-tRNA from spontaneous hydrolysis and promotes its binding to the 30S ribosomal subunits. Also involved in the hydrolysis of GTP during the formation of the 70S ribosomal complex. The polypeptide is Translation initiation factor IF-2 (Campylobacter jejuni (strain RM1221)).